Here is a 134-residue protein sequence, read N- to C-terminus: Peptide methionine sulfoxide reductase MsrB (134 aa).

A MsrB domain is found at 9–131 (DEYWRDKLDA…NSASIQLQKE (123 aa)). Cys48, Cys51, Cys97, and Cys100 together coordinate Zn(2+). The Nucleophile role is filled by Cys120.

It belongs to the MsrB Met sulfoxide reductase family. Zn(2+) is required as a cofactor.

It catalyses the reaction L-methionyl-[protein] + [thioredoxin]-disulfide + H2O = L-methionyl-(R)-S-oxide-[protein] + [thioredoxin]-dithiol. The polypeptide is Peptide methionine sulfoxide reductase MsrB (Saccharophagus degradans (strain 2-40 / ATCC 43961 / DSM 17024)).